The chain runs to 90 residues: MSSGGLLLLLGLLTLWAELTPVSGQDHPKFCYLPADPGRCKAHIPRFYYDSASNKCNKFIYGGCPGNANNFKTWDECRQTCGASAMGRPT.

A signal peptide spans 1-24 (MSSGGLLLLLGLLTLWAELTPVSG). The residue at position 25 (glutamine 25) is a Pyrrolidone carboxylic acid. Residues 31-81 (CYLPADPGRCKAHIPRFYYDSASNKCNKFIYGGCPGNANNFKTWDECRQTC) form the BPTI/Kunitz inhibitor domain. Intrachain disulfides connect cysteine 31–cysteine 81, cysteine 40–cysteine 64, and cysteine 56–cysteine 77. A propeptide spanning residues 86–90 (MGRPT) is cleaved from the precursor.

Belongs to the venom Kunitz-type family. In terms of tissue distribution, expressed by the venom gland.

It is found in the secreted. Serine protease inhibitor that principally inhibits trypsin (Ki=0.34 nM). Also inhibits alpha-chymotrypsin (Ki=270 nM), plasmin, plasma and pancreatic kallikrein. The sequence is that of Kunitz-type serine protease inhibitor 1 from Vipera ammodytes ammodytes (Western sand viper).